A 916-amino-acid chain; its full sequence is Chitin synthase B (916 aa).

Disordered regions lie at residues methionine 1–histidine 84 and serine 114–leucine 141. Residue asparagine 18 is glycosylated (N-linked (GlcNAc...) asparagine). The span at arginine 60–glutamate 75 shows a compositional bias: polar residues. The N-linked (GlcNAc...) asparagine glycan is linked to asparagine 546. Transmembrane regions (helical) follow at residues methionine 572–alanine 594, isoleucine 628–alanine 648, serine 663–valine 683, isoleucine 715–leucine 735, serine 743–phenylalanine 763, leucine 845–methionine 865, and alanine 884–leucine 904.

Belongs to the chitin synthase family. Class III subfamily.

The protein localises to the cell membrane. The enzyme catalyses [(1-&gt;4)-N-acetyl-beta-D-glucosaminyl](n) + UDP-N-acetyl-alpha-D-glucosamine = [(1-&gt;4)-N-acetyl-beta-D-glucosaminyl](n+1) + UDP + H(+). In terms of biological role, polymerizes chitin, a structural polymer of the cell wall and septum, by transferring the sugar moiety of UDP-GlcNAc to the non-reducing end of the growing chitin polymer. Involved in hyphal growth and more particularly in branching. This is Chitin synthase B from Aspergillus oryzae (strain ATCC 42149 / RIB 40) (Yellow koji mold).